Here is a 982-residue protein sequence, read N- to C-terminus: Probable beta-galactosidase C (982 aa).

Positions 1–21 are cleaved as a signal peptide; that stretch reads MRLFALLPVLLGLISSHFVSA. Residues tyrosine 80, asparagine 125, alanine 126, glutamate 127, and asparagine 185 each coordinate substrate. Catalysis depends on glutamate 186, which acts as the Proton donor. Residue tyrosine 249 participates in substrate binding. A disulfide bridge links cysteine 255 with cysteine 302. Asparagine 274 carries N-linked (GlcNAc...) asparagine glycosylation. The Nucleophile role is filled by glutamate 285. Tyrosine 351 contacts substrate. Asparagine 389, asparagine 434, asparagine 600, asparagine 675, asparagine 718, and asparagine 785 each carry an N-linked (GlcNAc...) asparagine glycan.

It belongs to the glycosyl hydrolase 35 family.

The protein resides in the secreted. It carries out the reaction Hydrolysis of terminal non-reducing beta-D-galactose residues in beta-D-galactosides.. Cleaves beta-linked terminal galactosyl residues from gangliosides, glycoproteins, and glycosaminoglycans. This is Probable beta-galactosidase C (lacC) from Penicillium rubens (strain ATCC 28089 / DSM 1075 / NRRL 1951 / Wisconsin 54-1255) (Penicillium chrysogenum).